We begin with the raw amino-acid sequence, 236 residues long: Orotidine 5'-phosphate decarboxylase (236 aa).

Substrate contacts are provided by residues Asp12, Lys34, 60 to 69 (DLKLHDIPHT), Thr123, Arg184, Gln193, Gly213, and Arg214. Lys62 serves as the catalytic Proton donor.

It belongs to the OMP decarboxylase family. Type 1 subfamily. As to quaternary structure, homodimer.

It carries out the reaction orotidine 5'-phosphate + H(+) = UMP + CO2. Its pathway is pyrimidine metabolism; UMP biosynthesis via de novo pathway; UMP from orotate: step 2/2. Catalyzes the decarboxylation of orotidine 5'-monophosphate (OMP) to uridine 5'-monophosphate (UMP). The chain is Orotidine 5'-phosphate decarboxylase from Gluconobacter oxydans (strain 621H) (Gluconobacter suboxydans).